The sequence spans 506 residues: Maturase K (506 aa).

Belongs to the intron maturase 2 family. MatK subfamily.

Its subcellular location is the plastid. The protein resides in the chloroplast. In terms of biological role, usually encoded in the trnK tRNA gene intron. Probably assists in splicing its own and other chloroplast group II introns. In Trifolium repens (Creeping white clover), this protein is Maturase K.